A 159-amino-acid chain; its full sequence is SsrA-binding protein (159 aa).

This sequence belongs to the SmpB family.

The protein resides in the cytoplasm. Its function is as follows. Required for rescue of stalled ribosomes mediated by trans-translation. Binds to transfer-messenger RNA (tmRNA), required for stable association of tmRNA with ribosomes. tmRNA and SmpB together mimic tRNA shape, replacing the anticodon stem-loop with SmpB. tmRNA is encoded by the ssrA gene; the 2 termini fold to resemble tRNA(Ala) and it encodes a 'tag peptide', a short internal open reading frame. During trans-translation Ala-aminoacylated tmRNA acts like a tRNA, entering the A-site of stalled ribosomes, displacing the stalled mRNA. The ribosome then switches to translate the ORF on the tmRNA; the nascent peptide is terminated with the 'tag peptide' encoded by the tmRNA and targeted for degradation. The ribosome is freed to recommence translation, which seems to be the essential function of trans-translation. This chain is SsrA-binding protein, found in Coxiella burnetii (strain CbuG_Q212) (Coxiella burnetii (strain Q212)).